The sequence spans 230 residues: Probable dual specificity protein phosphatase DDB_G0283417 (230 aa).

Positions 78 to 230 (NNNYESINLY…LEIFEKELLF (153 aa)) constitute a Tyrosine-protein phosphatase domain. Cysteine 174 acts as the Phosphocysteine intermediate in catalysis.

Belongs to the protein-tyrosine phosphatase family. Non-receptor class dual specificity subfamily.

It catalyses the reaction O-phospho-L-tyrosyl-[protein] + H2O = L-tyrosyl-[protein] + phosphate. It carries out the reaction O-phospho-L-seryl-[protein] + H2O = L-seryl-[protein] + phosphate. The enzyme catalyses O-phospho-L-threonyl-[protein] + H2O = L-threonyl-[protein] + phosphate. In terms of biological role, has a dual specificity toward Ser/Thr and Tyr-containing proteins. The sequence is that of Probable dual specificity protein phosphatase DDB_G0283417 from Dictyostelium discoideum (Social amoeba).